The sequence spans 419 residues: N-acylneuraminate cytidylyltransferase (419 aa).

It belongs to the CMP-NeuNAc synthase family. As to quaternary structure, monomer. May form aggregates. It depends on Mg(2+) as a cofactor. Mn(2+) is required as a cofactor.

It is found in the cytoplasm. The enzyme catalyses an N-acylneuraminate + CTP = a CMP-N-acyl-beta-neuraminate + diphosphate. Its activity is regulated as follows. Inhibited by the CTP analogs 5-mercuri-CTP and CTP-2',3'-dialdehyde. Its function is as follows. Catalyzes the formation of CMP-N-acetylneuraminic acid (CMP-NeuNAc), which is essential for the formation of the capsule. The sequence is that of N-acylneuraminate cytidylyltransferase (neuA) from Escherichia coli O18:K1:H7 (strain RS218 / NMEC).